The following is a 122-amino-acid chain: Ribonuclease P protein component (122 aa).

This sequence belongs to the RnpA family. Consists of a catalytic RNA component (M1 or rnpB) and a protein subunit.

It catalyses the reaction Endonucleolytic cleavage of RNA, removing 5'-extranucleotides from tRNA precursor.. Functionally, RNaseP catalyzes the removal of the 5'-leader sequence from pre-tRNA to produce the mature 5'-terminus. It can also cleave other RNA substrates such as 4.5S RNA. The protein component plays an auxiliary but essential role in vivo by binding to the 5'-leader sequence and broadening the substrate specificity of the ribozyme. This Lactobacillus johnsonii (strain CNCM I-12250 / La1 / NCC 533) protein is Ribonuclease P protein component.